The sequence spans 327 residues: MTSTLRVAFAGTPEFAQIALAALHQAGLPIVAVLSQPDRPAGRGMHLQASPVKQYAVSHGLGPVLQPPSLRRTGKYPQEAAAAIDALSAQQPDVMVVAAYGLILPQEVLDLPRFGCINIHGSLLPRWRGAAPIHRAIEAGDAETGITLMQMDAGLDTGDMIAMEHVPIGLTDTTGTLHDTLAALGGRMVVEALARLAQDGSLPATPQPAEGVTYAEKIAKEEAALDWSRQSAALLRQVHAFNPFPGASAELDGVSIKFWQAEALPDRPADAQPGAVLAADADGVVIACGAGALRVTQLQKPGGKRLPAREFLQGLPIRPGQRFASRA.

A (6S)-5,6,7,8-tetrahydrofolate-binding site is contributed by 122-125 (SLLP).

Belongs to the Fmt family.

The enzyme catalyses L-methionyl-tRNA(fMet) + (6R)-10-formyltetrahydrofolate = N-formyl-L-methionyl-tRNA(fMet) + (6S)-5,6,7,8-tetrahydrofolate + H(+). In terms of biological role, attaches a formyl group to the free amino group of methionyl-tRNA(fMet). The formyl group appears to play a dual role in the initiator identity of N-formylmethionyl-tRNA by promoting its recognition by IF2 and preventing the misappropriation of this tRNA by the elongation apparatus. In Ralstonia nicotianae (strain ATCC BAA-1114 / GMI1000) (Ralstonia solanacearum), this protein is Methionyl-tRNA formyltransferase.